The sequence spans 1040 residues: Multidrug resistance protein MdtB (1040 aa).

12 helical membrane passes run 16–36, 347–367, 369–389, 396–416, 440–460, 472–492, 537–557, 863–883, 888–908, 911–931, 968–988, and 998–1018; these read FIMRPVATTLLMVAILLAGII, LMMAIALVVMIIYLFLRNIPA, IIPGVAVPLSLIGTFAVMVFL, LTLMALTIATGFVVDDAIVVI, IGFTIISLTFSLIAVLIPLLF, FAITLAVAILISAVVSLTLTP, WLTLSVALSTLLLSVLLWVFI, LGSTVWLIVAAVVAMYIVLGI, FIHPITILSTLPTAGVGALLA, IAGSELDVIAIIGIILLIGIV, ILMTTLAALLGALPLMLSTGV, and IGMVGGLIVSQVLTLFTTPVI.

This sequence belongs to the resistance-nodulation-cell division (RND) (TC 2.A.6) family. MdtB subfamily. In terms of assembly, part of a tripartite efflux system composed of MdtA, MdtB and MdtC. MdtB forms a heteromultimer with MdtC.

The protein resides in the cell inner membrane. Functionally, the MdtABC tripartite complex confers resistance against novobiocin and deoxycholate. The polypeptide is Multidrug resistance protein MdtB (Escherichia coli O17:K52:H18 (strain UMN026 / ExPEC)).